A 310-amino-acid chain; its full sequence is Porphobilinogen deaminase (310 aa).

At C242 the chain carries S-(dipyrrolylmethanemethyl)cysteine.

It belongs to the HMBS family. As to quaternary structure, monomer. Dipyrromethane serves as cofactor.

The enzyme catalyses 4 porphobilinogen + H2O = hydroxymethylbilane + 4 NH4(+). It functions in the pathway porphyrin-containing compound metabolism; protoporphyrin-IX biosynthesis; coproporphyrinogen-III from 5-aminolevulinate: step 2/4. In terms of biological role, tetrapolymerization of the monopyrrole PBG into the hydroxymethylbilane pre-uroporphyrinogen in several discrete steps. The protein is Porphobilinogen deaminase of Shewanella baltica (strain OS155 / ATCC BAA-1091).